Reading from the N-terminus, the 235-residue chain is MNNVRTVSDTKRTFYNLHTRPINTIYRRVVEELMVEMHLLSVNIDFSYNPIYALGVVTTFDRFMQGYEPERDQESIFNALCRAIEQDPQHYRQDAERLQAIAKGLPVKDLIGWLGQTTYLDRDADLQAQLQAIANNPNFKYNRLFAIGVFSLLEQSDPELVKDEKQLTEALKAIAAGLHVSDDKLNKDLELYRSNLDKMAQALVVMADMLSADRKKREQRKQQSTAPVAPPSSNE.

Residues aspartate 183–valine 204 adopt a coiled-coil conformation. Positions aspartate 213–glutamate 235 are disordered. Over residues glutamine 222 to glutamate 235 the composition is skewed to polar residues.

The protein belongs to the THF1 family.

In terms of biological role, may be involved in photosynthetic membrane biogenesis. This Nostoc punctiforme (strain ATCC 29133 / PCC 73102) protein is Protein Thf1.